The chain runs to 76 residues: Demidefensin-3 (76 aa).

The signal sequence occupies residues 1–22; that stretch reads MRTLALHTAMLLLVALHAQAEA. A propeptide spanning residues 23–64 is cleaved from the precursor; that stretch reads RQARADEAAAQQQPGADDQGMAHSFTWPENAALPLSESERGL. A disordered region spans residues 25–45; the sequence is ARADEAAAQQQPGADDQGMAH. The segment covering 30–44 has biased composition (low complexity); the sequence is AAAQQQPGADDQGMA. C68 and C73 form a disulfide bridge. Residues 74–76 constitute a propeptide that is removed on maturation; the sequence is RLL.

Belongs to the alpha-defensin family. Theta subfamily. As to quaternary structure, forms a cyclic homodimer; disulfide-linked. Post-translationally, this is a cyclic peptide.

Functionally, has antimicrobial activities against bacteria and fungi. The protein is Demidefensin-3 of Macaca mulatta (Rhesus macaque).